Reading from the N-terminus, the 375-residue chain is Enoyl-[acyl-carrier-protein] reductase [NADH] 1, chloroplastic (375 aa).

The N-terminal 67 residues, 1–67 (MGASAATGMQ…SSKRSGVAIR (67 aa)), are a transit peptide targeting the chloroplast. Residues Gly-91, Tyr-98, 155 to 156 (DA), 202 to 203 (SL), and Leu-252 contribute to the NAD(+) site. Residues Tyr-254 and Tyr-264 each act as proton acceptor in the active site. Residues Lys-272 and 302–306 (LGSRA) contribute to the NAD(+) site.

This sequence belongs to the short-chain dehydrogenases/reductases (SDR) family. FabI subfamily. Homotetramer.

Its subcellular location is the plastid. It localises to the chloroplast. It carries out the reaction a 2,3-saturated acyl-[ACP] + NAD(+) = a (2E)-enoyl-[ACP] + NADH + H(+). It participates in lipid metabolism; fatty acid biosynthesis. Functionally, catalyzes the NAD-dependent reduction of a carbon-carbon double bond in an enoyl moiety that is covalently linked to an acyl carrier protein (ACP). Catalyzes the last reduction step in the de novo synthesis cycle of fatty acids. Involved in the elongation cycle of fatty acids which are used in lipid metabolism. Required for normal plant growth. The protein is Enoyl-[acyl-carrier-protein] reductase [NADH] 1, chloroplastic of Oryza sativa subsp. japonica (Rice).